A 108-amino-acid polypeptide reads, in one-letter code: uncharacterized protein (108 aa).

A helical transmembrane segment spans residues 15-37; sequence SYYFYIFWNFFLPMFIVYRGFGL.

The protein resides in the membrane. This is an uncharacterized protein from Archaeoglobus fulgidus (strain ATCC 49558 / DSM 4304 / JCM 9628 / NBRC 100126 / VC-16).